The primary structure comprises 323 residues: Calcium homeostasis modulator protein 2 (323 aa).

The Cytoplasmic portion of the chain corresponds to 1–21; that stretch reads MAALIAENFRFLSLFFKSKDV. The central pore stretch occupies residues 14–39; the sequence is LFFKSKDVMIFNGLVALGTVGSQELF. Residues 22 to 43 traverse the membrane as a helical segment; that stretch reads MIFNGLVALGTVGSQELFSVVA. At 44-52 the chain is on the extracellular side; it reads FHCPCSPAR. Disulfide bonds link C46–C130 and C48–C162. The helical transmembrane segment at 53–76 threads the bilayer; that stretch reads NYLYGLTAIGVPALALFLIGVILN. The Cytoplasmic portion of the chain corresponds to 77–101; it reads NHTWNLVAECQYRRAKNCSAAPNFL. A helical membrane pass occupies residues 102-132; the sequence is LLSSILGRAAVAPVTWSVISLLRGEAYVCAL. Over 133–179 the chain is Extracellular; sequence SEFVDPSSLTAGDKGFPPAHATEVLARFPCGEGPANLSSFREEVSRR. The segment at 145-152 is hemichannel docking; sequence DKGFPPAH. Residues 180–206 form a helical membrane-spanning segment; it reads LKYESQLFGWLLIGVVAILVFLTKCLK. The Cytoplasmic segment spans residues 207-323; the sequence is HYCSPLSYRQ…DNVEMALLTA (117 aa). The interval 214–251 is intersubunit interaction; that stretch reads YRQEAYWAQYRTNEDQLFQRTAEVHSRVLAANNVRRFF.

It belongs to the CALHM family. Homo-undecamer. Two undecameric hemichannels can assemble in a head-to-head manner to form a gap junction. As to expression, neuron, astrocyte, and microglia.

The protein localises to the cell membrane. The catalysed reaction is ATP(in) = ATP(out). Inhibited by divalent cations such as Co(2+) and Ni(2+). In terms of biological role, pore-forming subunit of Ca(2+) homeostasis modulator channels. Mediates ATP release from astrocytes and ATP-induced Ca(2+) influx in microglia thus regulating neuronal ATP and Ca(2+) homeostasis, synaptic transmission and neuroinflammatory response. May form intercellular gap junctions. The gating mechanism remains unknown. The chain is Calcium homeostasis modulator protein 2 from Mus musculus (Mouse).